The sequence spans 1230 residues: ABC transporter B family member 5 (1230 aa).

6 consecutive transmembrane segments (helical) span residues 27-47 (VLLM…SPLM), 78-98 (LVYL…CWMI), 154-174 (FIQL…RGWL), 177-197 (LVML…AIIV), 253-273 (GFVT…TYAL), and 286-306 (GYTG…SIAL). In terms of domain architecture, ABC transmembrane type-1 1 spans 30 to 318 (MIVGSIGAIA…ASPCLTAFTA (289 aa)). The 237-residue stretch at 353–589 (IELRDVCFSY…HEGAYSQLLR (237 aa)) folds into the ABC transporter 1 domain. 388-395 (GESGSGKS) is a binding site for ATP. N-linked (GlcNAc...) asparagine glycans are attached at residues asparagine 540, asparagine 615, and asparagine 616. The interval 602 to 621 (ISDGSISSGSSRGNNSTRQD) is disordered. A compositionally biased stretch (low complexity) spans 603–617 (SDGSISSGSSRGNNS). A run of 2 helical transmembrane segments spans residues 662-682 (ILIL…IFGI) and 707-727 (MIFV…NYLF). The ABC transmembrane type-1 2 domain maps to 663–950 (LILGTLVGAV…ASSFAPDSSK (288 aa)). N-linked (GlcNAc...) asparagine glycosylation is present at asparagine 759. 3 consecutive transmembrane segments (helical) span residues 798 to 818 (IIAF…IPFI), 889 to 909 (GVGF…CFYV), and 924 to 944 (VFQV…ASSF). Positions 985–1223 (IELCHISFTY…EGGVYASLVQ (239 aa)) constitute an ABC transporter 2 domain. 1020 to 1027 (GESGSGKS) lines the ATP pocket. N-linked (GlcNAc...) asparagine glycans are attached at residues asparagine 1074, asparagine 1174, and asparagine 1227.

It belongs to the ABC transporter superfamily. ABCB family. Multidrug resistance exporter (TC 3.A.1.201) subfamily.

Its subcellular location is the membrane. The sequence is that of ABC transporter B family member 5 (ABCB5) from Arabidopsis thaliana (Mouse-ear cress).